A 432-amino-acid polypeptide reads, in one-letter code: Enolase 2 (432 aa).

Residue glutamine 163 coordinates (2R)-2-phosphoglycerate. Catalysis depends on glutamate 205, which acts as the Proton donor. The Mg(2+) site is built by aspartate 242, glutamate 287, and aspartate 314. Positions 339, 368, 369, and 390 each coordinate (2R)-2-phosphoglycerate. Residue lysine 339 is the Proton acceptor of the active site.

The protein belongs to the enolase family. In terms of assembly, homodimer. Probably forms octamers. Requires Mg(2+) as cofactor.

Its subcellular location is the cytoplasm. It localises to the secreted. It is found in the cell surface. It carries out the reaction (2R)-2-phosphoglycerate = phosphoenolpyruvate + H2O. It participates in carbohydrate degradation; glycolysis; pyruvate from D-glyceraldehyde 3-phosphate: step 4/5. In terms of biological role, catalyzes the reversible conversion of 2-phosphoglycerate (2-PG) into phosphoenolpyruvate (PEP). It is essential for the degradation of carbohydrates via glycolysis. The chain is Enolase 2 from Lactobacillus gasseri (strain ATCC 33323 / DSM 20243 / BCRC 14619 / CIP 102991 / JCM 1131 / KCTC 3163 / NCIMB 11718 / NCTC 13722 / AM63).